A 311-amino-acid polypeptide reads, in one-letter code: Ribosomal RNA small subunit methyltransferase H (311 aa).

S-adenosyl-L-methionine is bound by residues 32–34 (AGH), Asp52, Phe79, Asp100, and Gln107.

Belongs to the methyltransferase superfamily. RsmH family.

Its subcellular location is the cytoplasm. It catalyses the reaction cytidine(1402) in 16S rRNA + S-adenosyl-L-methionine = N(4)-methylcytidine(1402) in 16S rRNA + S-adenosyl-L-homocysteine + H(+). Its function is as follows. Specifically methylates the N4 position of cytidine in position 1402 (C1402) of 16S rRNA. This chain is Ribosomal RNA small subunit methyltransferase H, found in Staphylococcus aureus (strain Mu3 / ATCC 700698).